A 777-amino-acid chain; its full sequence is Spastin (777 aa).

Composition is skewed to low complexity over residues 1-24 (MVRTKSSSSSASSSSQKSPIKSNN), 51-76 (HAHSNNSNVSSSSRRAATATSGSSSP), and 85-94 (DDLTPTGSSP). The interval 1–103 (MVRTKSSSSS…PRSCNGRGHS (103 aa)) is disordered. The Cytoplasmic segment spans residues 1-116 (MVRTKSSSSS…KQNLYVVSFP (116 aa)). The segment at 1–215 (MVRTKSSSSS…RALQPLEMAT (215 aa)) is required for localization to punctate cytoplasmic foci. Positions 117 to 137 (IIFLFNVLRSLIYQLFCIFRY) form an intramembrane region, helical. Over 138 to 777 (LYGASTKVLY…WSQDYGDITI (640 aa)) the chain is Cytoplasmic. Positions 213 to 777 (MATNRPGGGY…WSQDYGDITI (565 aa)) are sufficient for interaction with microtubules and microtubule severing. Residues 238 to 313 (HRRAFEYISK…SMARDRLHFL (76 aa)) form the MIT domain. Residues 327 to 474 (LKEKQPAPKQ…SSGSGASTPM (148 aa)) are disordered. Composition is skewed to polar residues over residues 372-389 (QNGTSSSRPAPSGQTATG), 406-425 (PVTNKSQTLPRNLGSKTTVG), and 444-460 (QFSSGRNTPPQRSRTPI). A compositionally biased stretch (low complexity) spans 461 to 471 (NNNASSGSGAS). A required for interaction with microtubules region spans residues 462 to 474 (NNASSGSGASTPM). 542-549 (GPPGNGKT) contacts ATP.

The protein belongs to the AAA ATPase family. Spastin subfamily. As to quaternary structure, homohexamer. The homohexamer is stabilized by ATP-binding. The homohexamer may adopt a ring conformation through which microtubules pass prior to being severed. Interacts with microtubules. Interacts with atl; may be involved in microtubule dynamics.

The protein localises to the membrane. The protein resides in the cytoplasm. It is found in the cytoskeleton. It localises to the microtubule organizing center. Its subcellular location is the centrosome. The protein localises to the chromosome. The protein resides in the lipid droplet. The enzyme catalyses n ATP + n H2O + a microtubule = n ADP + n phosphate + (n+1) alpha/beta tubulin heterodimers.. Functionally, ATP-dependent microtubule severing protein. Stimulates microtubule minus-end depolymerization and poleward microtubule flux in the mitotic spindle. Regulates microtubule stability in the neuromuscular junction synapse. Involved in lipid metabolism by regulating the size and distribution of lipid droplets. Involved in axon regeneration by regulating microtubule severing. This is Spastin from Drosophila willistoni (Fruit fly).